The chain runs to 101 residues: Small ribosomal subunit protein uS14 (101 aa).

The protein belongs to the universal ribosomal protein uS14 family. Part of the 30S ribosomal subunit. Contacts proteins S3 and S10.

Its function is as follows. Binds 16S rRNA, required for the assembly of 30S particles and may also be responsible for determining the conformation of the 16S rRNA at the A site. The protein is Small ribosomal subunit protein uS14 of Salmonella paratyphi A (strain ATCC 9150 / SARB42).